The chain runs to 504 residues: Deoxyguanosinetriphosphate triphosphohydrolase (504 aa).

Residues 66–273 (RLTHSLEVQQ…MEAADDISYC (208 aa)) enclose the HD domain.

It belongs to the dGTPase family. Type 1 subfamily. Homotetramer. It depends on Mg(2+) as a cofactor.

It catalyses the reaction dGTP + H2O = 2'-deoxyguanosine + triphosphate + H(+). Its function is as follows. dGTPase preferentially hydrolyzes dGTP over the other canonical NTPs. This chain is Deoxyguanosinetriphosphate triphosphohydrolase, found in Cronobacter sakazakii (strain ATCC BAA-894) (Enterobacter sakazakii).